Reading from the N-terminus, the 386-residue chain is Succinate--CoA ligase [ADP-forming] subunit beta (386 aa).

In terms of domain architecture, ATP-grasp spans 9–244; the sequence is KAVLRSYGVS…LDEEDAKEIE (236 aa). ATP is bound by residues K46, 53–55, E99, C102, and E107; that span reads GRG. Mg(2+) is bound by residues N199 and D213. Residues N264 and 321–323 contribute to the substrate site; that span reads GIM.

This sequence belongs to the succinate/malate CoA ligase beta subunit family. In terms of assembly, heterotetramer of two alpha and two beta subunits. Requires Mg(2+) as cofactor.

It catalyses the reaction succinate + ATP + CoA = succinyl-CoA + ADP + phosphate. It carries out the reaction GTP + succinate + CoA = succinyl-CoA + GDP + phosphate. It participates in carbohydrate metabolism; tricarboxylic acid cycle; succinate from succinyl-CoA (ligase route): step 1/1. Functionally, succinyl-CoA synthetase functions in the citric acid cycle (TCA), coupling the hydrolysis of succinyl-CoA to the synthesis of either ATP or GTP and thus represents the only step of substrate-level phosphorylation in the TCA. The beta subunit provides nucleotide specificity of the enzyme and binds the substrate succinate, while the binding sites for coenzyme A and phosphate are found in the alpha subunit. The protein is Succinate--CoA ligase [ADP-forming] subunit beta of Bacillus thuringiensis (strain Al Hakam).